A 201-amino-acid polypeptide reads, in one-letter code: ATP synthase subunit delta, chloroplastic (201 aa).

Belongs to the ATPase delta chain family. F-type ATPases have 2 components, F(1) - the catalytic core - and F(0) - the membrane proton channel. F(1) has five subunits: alpha(3), beta(3), gamma(1), delta(1), epsilon(1). CF(0) has four main subunits: a(1), b(1), b'(1) and c(10-14). The alpha and beta chains form an alternating ring which encloses part of the gamma chain. F(1) is attached to F(0) by a central stalk formed by the gamma and epsilon chains, while a peripheral stalk is formed by the delta, b and b' chains.

The protein resides in the plastid. Its subcellular location is the chloroplast thylakoid membrane. F(1)F(0) ATP synthase produces ATP from ADP in the presence of a proton or sodium gradient. F-type ATPases consist of two structural domains, F(1) containing the extramembraneous catalytic core and F(0) containing the membrane proton channel, linked together by a central stalk and a peripheral stalk. During catalysis, ATP synthesis in the catalytic domain of F(1) is coupled via a rotary mechanism of the central stalk subunits to proton translocation. Functionally, this protein is part of the stalk that links CF(0) to CF(1). It either transmits conformational changes from CF(0) to CF(1) or is implicated in proton conduction. The chain is ATP synthase subunit delta, chloroplastic from Vaucheria litorea (Yellow-green alga).